Reading from the N-terminus, the 381-residue chain is MAEQPIRYEFIKECKQTGARLGRVHTPHGSFETPVFMPVGTLATVKTMSPDELKSMDAGIILSNTYHLWLRPGHDIVKEAGGLHKFMNWDRAILTDSGGFQVFSLSKFRNIEEEGVHFRNHLNGDKLFLSPEKAMEIQNALGSDIMMAFDECPPYPAEYDYMKRSVERTSRWAERCLEAHGRSDEQGLFGIVQGGEYEDLRTQSAKDLVSLDFPGYAIGGLSVGEPKHVMNRVLEFTTPLLPKDKPRYLMGVGSPDALIDGAIRGVDMFDCVLPTRIARNGTVFTNEGRLNMKNAKYERDFRPIDEECSCHTCKNYSRAYIRHLIRCNETFGIRLTTYHNLHFLLHLMEQVRQAIREDRLGDFREEFFERYGYNKPNAKSF.

Asp-96 (proton acceptor) is an active-site residue. Residues 96–100 (DSGGF), Asp-150, Gln-193, and Gly-220 contribute to the substrate site. The RNA binding stretch occupies residues 251-257 (GVGSPDA). Asp-270 serves as the catalytic Nucleophile. Residues 275–279 (TRIAR) are RNA binding; important for wobble base 34 recognition. Zn(2+)-binding residues include Cys-308, Cys-310, Cys-313, and His-339.

This sequence belongs to the queuine tRNA-ribosyltransferase family. In terms of assembly, homodimer. Within each dimer, one monomer is responsible for RNA recognition and catalysis, while the other monomer binds to the replacement base PreQ1. Zn(2+) is required as a cofactor.

It catalyses the reaction 7-aminomethyl-7-carbaguanine + guanosine(34) in tRNA = 7-aminomethyl-7-carbaguanosine(34) in tRNA + guanine. The protein operates within tRNA modification; tRNA-queuosine biosynthesis. Functionally, catalyzes the base-exchange of a guanine (G) residue with the queuine precursor 7-aminomethyl-7-deazaguanine (PreQ1) at position 34 (anticodon wobble position) in tRNAs with GU(N) anticodons (tRNA-Asp, -Asn, -His and -Tyr). Catalysis occurs through a double-displacement mechanism. The nucleophile active site attacks the C1' of nucleotide 34 to detach the guanine base from the RNA, forming a covalent enzyme-RNA intermediate. The proton acceptor active site deprotonates the incoming PreQ1, allowing a nucleophilic attack on the C1' of the ribose to form the product. After dissociation, two additional enzymatic reactions on the tRNA convert PreQ1 to queuine (Q), resulting in the hypermodified nucleoside queuosine (7-(((4,5-cis-dihydroxy-2-cyclopenten-1-yl)amino)methyl)-7-deazaguanosine). This chain is Queuine tRNA-ribosyltransferase, found in Bacillus velezensis (strain DSM 23117 / BGSC 10A6 / LMG 26770 / FZB42) (Bacillus amyloliquefaciens subsp. plantarum).